Consider the following 502-residue polypeptide: Probable RNA exonuclease C9B6.11c (502 aa).

Residues 338–379 (SELEEKNASTKTENDSNEDDKEECQSSSTSSVPESTASTPKK) are disordered. Basic and acidic residues predominate over residues 341-351 (EEKNASTKTEN). Low complexity predominate over residues 363-376 (SSSTSSVPESTAST).

Belongs to the CCR4/nocturin family.

It is found in the cytoplasm. It localises to the nucleus. This chain is Probable RNA exonuclease C9B6.11c, found in Schizosaccharomyces pombe (strain 972 / ATCC 24843) (Fission yeast).